Consider the following 84-residue polypeptide: Small ribosomal subunit protein bS20 (84 aa).

A disordered region spans residues 1 to 25; the sequence is MPVIKSAMKRVRTSEKAAARNRSQM.

The protein belongs to the bacterial ribosomal protein bS20 family.

Functionally, binds directly to 16S ribosomal RNA. The protein is Small ribosomal subunit protein bS20 of Pediococcus pentosaceus (strain ATCC 25745 / CCUG 21536 / LMG 10740 / 183-1w).